The following is a 370-amino-acid chain: 2-oxoisovalerate dehydrogenase subunit beta, mitochondrial (370 aa).

The N-terminal 25 residues, 1–25 (MLRGNNIKKVNSLLVRSFHSTVGNR), are a transit peptide targeting the mitochondrion. Residue Tyr-130 coordinates thiamine diphosphate. The K(+) site is built by Gly-156, Leu-158, Thr-159, and Glu-209.

As to quaternary structure, heterotetramer of 2 alpha and 2 beta chains. Requires thiamine diphosphate as cofactor.

The protein resides in the mitochondrion matrix. The catalysed reaction is N(6)-[(R)-lipoyl]-L-lysyl-[protein] + 3-methyl-2-oxobutanoate + H(+) = N(6)-[(R)-S(8)-2-methylpropanoyldihydrolipoyl]-L-lysyl-[protein] + CO2. In terms of biological role, the branched-chain alpha-keto dehydrogenase complex catalyzes the overall conversion of alpha-keto acids to acyl-CoA and CO(2). It contains multiple copies of three enzymatic components: branched-chain alpha-keto acid decarboxylase (E1), lipoamide acyltransferase (E2) and lipoamide dehydrogenase (E3). This chain is 2-oxoisovalerate dehydrogenase subunit beta, mitochondrial (bkdB), found in Dictyostelium discoideum (Social amoeba).